The chain runs to 108 residues: Protein SMALL AUXIN UP-REGULATED RNA 8 (108 aa).

It belongs to the ARG7 family. In terms of tissue distribution, expressed in seedlings, leaves and flowers.

It localises to the cell membrane. In terms of biological role, provide a mechanistic link between auxin and plasma membrane H(+)-ATPases (PM H(+)-ATPases, e.g. AHA1 and AHA2), and triggers PM H(+)-ATPases activity by promoting phosphorylation of their C-terminal autoinhibitory domain as a result of PP2C-D subfamily of type 2C phosphatases inhibition, thus leading to the acidification of the apoplast and the facilitation of solutes and water uptake to drive cell expansion. Triggers plant growth probably by promoting cell elongation. Regulates branch angles and bending. This chain is Protein SMALL AUXIN UP-REGULATED RNA 8, found in Arabidopsis thaliana (Mouse-ear cress).